The following is a 507-amino-acid chain: ATP synthase subunit alpha, chloroplastic (507 aa).

Residue 170 to 177 participates in ATP binding; it reads GDRQTGKT.

The protein belongs to the ATPase alpha/beta chains family. In terms of assembly, F-type ATPases have 2 components, CF(1) - the catalytic core - and CF(0) - the membrane proton channel. CF(1) has five subunits: alpha(3), beta(3), gamma(1), delta(1), epsilon(1). CF(0) has four main subunits: a, b, b' and c.

Its subcellular location is the plastid. It is found in the chloroplast thylakoid membrane. The catalysed reaction is ATP + H2O + 4 H(+)(in) = ADP + phosphate + 5 H(+)(out). In terms of biological role, produces ATP from ADP in the presence of a proton gradient across the membrane. The alpha chain is a regulatory subunit. The protein is ATP synthase subunit alpha, chloroplastic of Oenothera glazioviana (Large-flowered evening primrose).